We begin with the raw amino-acid sequence, 294 residues long: GTPase Era (294 aa).

The 170-residue stretch at 2–171 folds into the Era-type G domain; that stretch reads NSGVVTIIGR…LSLLIELLPE (170 aa). A G1 region spans residues 10–17; that stretch reads GRPSAGKS. 10–17 is a binding site for GTP; sequence GRPSAGKS. Residues 36 to 40 form a G2 region; the sequence is QTTRN. Positions 57-60 are G3; it reads DTPG. Residues 57–61 and 119–122 each bind GTP; these read DTPGY and NKAD. The G4 stretch occupies residues 119–122; the sequence is NKAD. A G5 region spans residues 150–152; it reads ISA. In terms of domain architecture, KH type-2 spans 202 to 280; the sequence is TREEIPHALY…QLDLQVRVNK (79 aa).

Belongs to the TRAFAC class TrmE-Era-EngA-EngB-Septin-like GTPase superfamily. Era GTPase family. Monomer.

It localises to the cytoplasm. The protein localises to the cell inner membrane. An essential GTPase that binds both GDP and GTP, with rapid nucleotide exchange. Plays a role in 16S rRNA processing and 30S ribosomal subunit biogenesis and possibly also in cell cycle regulation and energy metabolism. The chain is GTPase Era from Treponema denticola (strain ATCC 35405 / DSM 14222 / CIP 103919 / JCM 8153 / KCTC 15104).